The primary structure comprises 442 residues: Betaine reductase complex component B subunit alpha (442 aa).

Heterotetramer of two alpha and two beta subunits. Component of the betaine reductase complex, together with components A and C. PB is substrate specific.

It catalyses the reaction acetyl phosphate + trimethylamine + [thioredoxin]-disulfide + H2O = glycine betaine + [thioredoxin]-dithiol + phosphate + H(+). Its function is as follows. In the first step of betaine reductase, the substrate is bound to component PB via a Schiff base intermediate. Then the PB-activated substrate is nucleophilically attacked by the selenol anion of component PA to transform it to a carboxymethylated selenoether and the respective amine. By action of component PC, acetyl phosphate is formed, leaving component PA in its oxidized state. Finally component PA becomes reduced by the thioredoxin system to start a new catalytic cycle of reductive deamination. The polypeptide is Betaine reductase complex component B subunit alpha (grdI) (Peptoclostridium acidaminophilum (Eubacterium acidaminophilum)).